Consider the following 318-residue polypeptide: CRISPR-associated endonuclease Cas1 1 (318 aa).

Glu-157, His-222, and Glu-237 together coordinate Mn(2+).

Belongs to the CRISPR-associated endonuclease Cas1 family. In terms of assembly, homodimer, forms a heterotetramer with a Cas2 homodimer. Mg(2+) is required as a cofactor. It depends on Mn(2+) as a cofactor.

Functionally, CRISPR (clustered regularly interspaced short palindromic repeat), is an adaptive immune system that provides protection against mobile genetic elements (viruses, transposable elements and conjugative plasmids). CRISPR clusters contain spacers, sequences complementary to antecedent mobile elements, and target invading nucleic acids. CRISPR clusters are transcribed and processed into CRISPR RNA (crRNA). Acts as a dsDNA endonuclease. Involved in the integration of spacer DNA into the CRISPR cassette. This Francisella tularensis subsp. novicida (strain U112) protein is CRISPR-associated endonuclease Cas1 1.